The primary structure comprises 186 residues: Ran guanine nucleotide release factor (186 aa).

Positions 27–70 (DLRPVPDNQEVFCHPVTDQSLIVELLELQAHVRGEAAARYHFED) are interaction with RAN.

Belongs to the MOG1 family. As to quaternary structure, monomer. Interacts with RAN, both RAN-GTP and RAN-GDP. Competes with RCC1 for a common binding site on RAN and thereby inhibits RCC1-mediated nucleotide exchange. Forms a complex with RAN-GTP and RANBP1. Interacts with the cytoplasmic loop 2 of SCN5A. As to expression, isoform 1 and isoform 2 are ubiquitously expressed. Detected in heart and brain.

It localises to the nucleus. Its subcellular location is the cytoplasm. It is found in the perinuclear region. The protein resides in the cell membrane. Functionally, may regulate the intracellular trafficking of RAN. Promotes guanine nucleotide release from RAN and inhibits binding of new GTP by preventing the binding of the RAN guanine nucleotide exchange factor RCC1. Regulates the levels of GTP-bound RAN in the nucleus, and thereby plays a role in the regulation of RAN-dependent mitotic spindle dynamics. Enhances the expression of SCN5A at the cell membrane in cardiomyocytes. This chain is Ran guanine nucleotide release factor (RANGRF), found in Homo sapiens (Human).